Consider the following 132-residue polypeptide: D-ribose pyranase (132 aa).

Residue histidine 20 is the Proton donor of the active site. Substrate is bound by residues aspartate 28, histidine 99, and 121–123; that span reads YSN.

It belongs to the RbsD / FucU family. RbsD subfamily. Homodecamer.

Its subcellular location is the cytoplasm. The catalysed reaction is beta-D-ribopyranose = beta-D-ribofuranose. Its pathway is carbohydrate metabolism; D-ribose degradation; D-ribose 5-phosphate from beta-D-ribopyranose: step 1/2. In terms of biological role, catalyzes the interconversion of beta-pyran and beta-furan forms of D-ribose. This is D-ribose pyranase from Streptococcus agalactiae serotype V (strain ATCC BAA-611 / 2603 V/R).